The following is a 192-amino-acid chain: Adenylate kinase (192 aa).

Residue 10–18 participates in ATP binding; it reads GVPGVGKTT.

Belongs to the archaeal adenylate kinase family.

The protein localises to the cytoplasm. The enzyme catalyses AMP + ATP = 2 ADP. This Methanoculleus marisnigri (strain ATCC 35101 / DSM 1498 / JR1) protein is Adenylate kinase.